The chain runs to 138 residues: MAKLLPRIGSRKNGRISSRKNARKIPKGVIHVQASFNNTIVTVTDVRGRVISWSSAGACGFRGTRRGTPFAAQTAAGNAIRTVVDQGMQRAEVMIKGPGLGRDAALRAIRRSGILLSFVRDVTPMPHNGCRPPKKRRV.

The interval 1–22 is disordered; the sequence is MAKLLPRIGSRKNGRISSRKNA. Over residues 9–22 the composition is skewed to basic residues; sequence GSRKNGRISSRKNA.

The protein belongs to the universal ribosomal protein uS11 family. In terms of assembly, part of the 30S ribosomal subunit.

It is found in the plastid. The protein localises to the chloroplast. The protein is Small ribosomal subunit protein uS11c of Populus alba (White poplar).